Reading from the N-terminus, the 91-residue chain is Small ribosomal subunit protein bS20 (91 aa).

The tract at residues 1 to 26 (MANLKSSKKDIRRTARRKERNGEDRT) is disordered.

This sequence belongs to the bacterial ribosomal protein bS20 family.

Its function is as follows. Binds directly to 16S ribosomal RNA. The sequence is that of Small ribosomal subunit protein bS20 from Leptospira biflexa serovar Patoc (strain Patoc 1 / Ames).